The chain runs to 295 residues: Cell shape-determining protein MreC (295 aa).

Residues methionine 1–alanine 34 form the signal peptide. The stretch at valine 66–serine 112 forms a coiled coil. The disordered stretch occupies residues serine 276 to glutamine 295.

This sequence belongs to the MreC family. Homooligomer of 24 subunits, arranged as 12 dimers.

Its function is as follows. Involved in formation and maintenance of cell shape. The chain is Cell shape-determining protein MreC from Listeria monocytogenes serovar 1/2a (strain ATCC BAA-679 / EGD-e).